A 398-amino-acid chain; its full sequence is tRNA-specific 2-thiouridylase MnmA (398 aa).

Residues 18–25 (AMSGGVDS) and Leu-44 contribute to the ATP site. The active-site Nucleophile is Cys-112. A disulfide bond links Cys-112 and Cys-213. Gly-136 is a binding site for ATP. The tract at residues 163–165 (RDQ) is interaction with tRNA. Cys-213 serves as the catalytic Cysteine persulfide intermediate.

Belongs to the MnmA/TRMU family.

It is found in the cytoplasm. It carries out the reaction S-sulfanyl-L-cysteinyl-[protein] + uridine(34) in tRNA + AH2 + ATP = 2-thiouridine(34) in tRNA + L-cysteinyl-[protein] + A + AMP + diphosphate + H(+). Its function is as follows. Catalyzes the 2-thiolation of uridine at the wobble position (U34) of tRNA, leading to the formation of s(2)U34. The chain is tRNA-specific 2-thiouridylase MnmA from Sinorhizobium fredii (strain NBRC 101917 / NGR234).